The primary structure comprises 928 residues: MORC family CW-type zinc finger protein 4 (928 aa).

The segment at 417 to 469 (RIPDQTWVQCDECLKWRRLPGMVDPSTLPARWFCYYNPHPKFKRCSVPEEQER) adopts a CW-type zinc-finger fold. 4 residues coordinate Zn(2+): cysteine 426, cysteine 429, cysteine 450, and cysteine 461. Disordered regions lie at residues 474–510 (LHRS…TPPL), 527–546 (NSPS…PRLK), 599–649 (AYPE…DQDQ), and 718–766 (RAES…LKRT). Residues 485–497 (AAEKKQKPMESDK) are compositionally biased toward basic and acidic residues. Composition is skewed to basic and acidic residues over residues 626-636 (ESNKHTEENRE), 739-748 (KGKDCQDSRS), and 756-766 (TPKESEELKRT). Residues 758–867 (KESEELKRTT…LEVLQKAQVS (110 aa)) are a coiled coil.

It localises to the nucleus. Its function is as follows. Histone methylation reader which binds to non-methylated (H3K4me0), monomethylated (H3K4me1), dimethylated (H3K4me2) and trimethylated (H3K4me3) 'Lys-4' on histone H3. The order of binding preference is H3K4me3 &gt; H3K4me2 &gt; H3K4me1 &gt; H3K4me0. This chain is MORC family CW-type zinc finger protein 4 (Morc4), found in Mus musculus (Mouse).